A 225-amino-acid polypeptide reads, in one-letter code: Prohead protease (225 aa).

Residues H65, S114, and E141 contribute to the active site.

The protein belongs to the HK97 prohead protease protein family. In terms of processing, cleaves itself autocatalytically to yield the mature form of the protease.

It localises to the virion. Its function is as follows. Protease involved in virion assembly and maturation. This Escherichia coli (Bacteriophage HK97) protein is Prohead protease (4).